The primary structure comprises 129 residues: Protein LLP homolog (129 aa).

Residues 1–21 are compositionally biased toward basic residues; it reads MAKSLRSKWKRKMRAEKRKKN. The segment at 1 to 27 is disordered; it reads MAKSLRSKWKRKMRAEKRKKNAPKEAS. Glycyl lysine isopeptide (Lys-Gly) (interchain with G-Cter in SUMO2) cross-links involve residues Lys67 and Lys74. The span at 100–122 shows a compositional bias: basic residues; that stretch reads RQRKRLKAKREKRKGKSKAKAVK. A disordered region spans residues 100-129; it reads RQRKRLKAKREKRKGKSKAKAVKVAKGLAW.

It belongs to the learning-associated protein family. In terms of assembly, interacts with CTCF, MYO1C and with the transcriptional machinery, including RNA polymerase II and TBP.

The protein resides in the nucleus. The protein localises to the nucleolus. It is found in the chromosome. In hippocampal neurons, regulates dendritic and spine growth and synaptic transmission. The sequence is that of Protein LLP homolog (LLPH) from Homo sapiens (Human).